A 59-amino-acid chain; its full sequence is Aedesin (59 aa).

Residues 1-23 (MNFTKLFAIVLLAALVLLGQTEA) form the signal peptide.

Belongs to the cecropin family. As to expression, salivary gland (at protein level).

It localises to the secreted. Antimicrobial peptide. Exhibits antibacterial activity against Gram-negative bacteria, such as Escherichia coli, Pseudomonas aeruginosa, Acinetobacter baumannii and Klebsiella pneumoniae. Shows no antibacterial effects against Gram-positive bacteria, such as Staphylococcus aureus, Enterococcus faecalis and Enterococcus faecium. Exhibits antiviral activity against all four dengue virus serotypes and chikungunya virus. Exhibits leishmanicidal activity. Partially neutralizes lipopolysaccharides (LPS). Exhibits anti-inflammatory properties: inhibits LPS-induced iNOS/NOS2 transcription, nitric oxide (NO) and pro-inflammatory cytokine production in mouse macrophages and human peripheral blood mononuclear cells (PBMCs); inhibits LPS-induced activation of MAPK and NF-kappa-B signaling pathways in mouse macrophages. The protein is Aedesin of Aedes aegypti (Yellowfever mosquito).